We begin with the raw amino-acid sequence, 278 residues long: Large ribosomal subunit protein uL2 (278 aa).

Disordered regions lie at residues 27-58 (STPE…GGGH) and 224-278 (VVMN…GKKR). Residues 37–58 (LHGKGGRNAHGRITTRHKGGGH) show a composition bias toward basic residues. Basic and acidic residues predominate over residues 253–268 (PEGRTRKPNKPSDKLI). Over residues 269-278 (VRRRRTGKKR) the composition is skewed to basic residues.

The protein belongs to the universal ribosomal protein uL2 family. As to quaternary structure, part of the 50S ribosomal subunit. Forms a bridge to the 30S subunit in the 70S ribosome.

Its function is as follows. One of the primary rRNA binding proteins. Required for association of the 30S and 50S subunits to form the 70S ribosome, for tRNA binding and peptide bond formation. It has been suggested to have peptidyltransferase activity; this is somewhat controversial. Makes several contacts with the 16S rRNA in the 70S ribosome. The polypeptide is Large ribosomal subunit protein uL2 (Mycobacterium sp. (strain KMS)).